The following is a 725-amino-acid chain: MSLKMKGKKYTDLDFVPTISDSEEDVPDLDSDEEKPKPETKGKKKNKSVDEESADMNSGFRFNTDDGEINTNFDGWEFLGDEKDEEKKDVDLDKIIRKKGGLIGMAHVDEAEKSESEESESDDEDLAMDGFGMGAQEQPEGEEEDEDASNSEQESNDEEEDDDEETYDVGDAGDAEEKVEEDTAEEMQAFYAPESESENAKKEVHKTFNDLALSRPVMKGLSNLGYVKPSPIQSATIPIALLGKDIIAGAVTGSGKTAAFMIPIIERLLYKPAKVASTRVIVLTPTRELAIQVADVGKKIGQFVSNLTFGLAVGGLNLRQQEQMLKTRPDIVIATPGRFIDHIRNSASFNVDSVEVLVIDEADRMLEDGFQDELNEIMSLLPSKRQTLLFSATMNSRIKQLISLSLKRPVRIMIDPPKQAATKLTQEFVRIRKRDHLKPSLLFNLIRKLDPNGQKRIVVFVARKDMAHKLRIILGLLGMAVAELHGSLTQEQRLDSVNKFKSLQVPVLICTDLASRGLDIPKIEVVINYDMPKSYEIYLHRVGRTARAGREGRSITFVGEASAERSIVKDAIRGVNDSEIPGSKAVGRNVDWNQVEETNKIVENMDQTVQDILVEEKEEKEILRAEMELKKGENLLKHKDEIQSRPKRTWFQSEKEKKNSKIMGALSKTKKEVNSKKRKRNEAMEDGHKRSYKKTQSDRTADQERTMKKQAKANGKKKGKSKGKR.

The interval 14–184 (DFVPTISDSE…AEEKVEEDTA (171 aa)) is disordered. Acidic residues predominate over residues 21-33 (DSEEDVPDLDSDE). 2 stretches are compositionally biased toward basic and acidic residues: residues 85 to 95 (EEKKDVDLDKI) and 107 to 116 (HVDEAEKSES). Composition is skewed to acidic residues over residues 117–127 (EESESDDEDLA) and 139–184 (PEGE…EDTA). Residues 206 to 234 (KTFNDLALSRPVMKGLSNLGYVKPSPIQS) carry the Q motif motif. The 176-residue stretch at 237–412 (IPIALLGKDI…SLSLKRPVRI (176 aa)) folds into the Helicase ATP-binding domain. 250–257 (AVTGSGKT) is an ATP binding site. A DEAD box motif is present at residues 360–363 (DEAD). The Helicase C-terminal domain occupies 423–613 (KLTQEFVRIR…NMDQTVQDIL (191 aa)). Residues 607 to 686 (QTVQDILVEE…KRKRNEAMED (80 aa)) are a coiled coil. Residues 646–725 (PKRTWFQSEK…KKKGKSKGKR (80 aa)) form a disordered region. Positions 669–707 (TKKEVNSKKRKRNEAMEDGHKRSYKKTQSDRTADQERTM) are enriched in basic and acidic residues. Positions 708 to 725 (KKQAKANGKKKGKSKGKR) are enriched in basic residues.

The protein belongs to the DEAD box helicase family. DDX27/DRS1 subfamily. As to quaternary structure, associates with pre-ribosomal particles.

The protein resides in the nucleus. It is found in the nucleolus. The catalysed reaction is ATP + H2O = ADP + phosphate + H(+). In terms of biological role, ATP-binding RNA helicase involved in ribosome assembly. This chain is ATP-dependent RNA helicase DRS1 (DRS1), found in Candida glabrata (strain ATCC 2001 / BCRC 20586 / JCM 3761 / NBRC 0622 / NRRL Y-65 / CBS 138) (Yeast).